A 537-amino-acid polypeptide reads, in one-letter code: Actin-histidine N-methyltransferase (537 aa).

The span at 1–12 shows a compositional bias: basic residues; that stretch reads MGKNTKRNKKTK. Residues 1–50 form a disordered region; that stretch reads MGKNTKRNKKTKQQQQQPQQNGVTASASGTAVEDFEDQQAASSLPSLNGK. S-adenosyl-L-methionine contacts are provided by residues Arg-114, 143 to 145, Arg-299, 325 to 329, and 375 to 377; these read YQL, DMANH, and NGF. The SET domain occupies 133 to 364; the sequence is EGLEIAIFPG…TGEQFFIYYG (232 aa).

It belongs to the class V-like SAM-binding methyltransferase superfamily. SETD3 actin-histidine methyltransferase family.

It localises to the cytoplasm. The protein localises to the nucleus. The catalysed reaction is L-histidyl-[protein] + S-adenosyl-L-methionine = N(tele)-methyl-L-histidyl-[protein] + S-adenosyl-L-homocysteine + H(+). Its function is as follows. Protein-histidine N-methyltransferase that specifically mediates 3-methylhistidine (tele-methylhistidine) methylation of actin at 'His-74'. The protein is Actin-histidine N-methyltransferase of Drosophila melanogaster (Fruit fly).